We begin with the raw amino-acid sequence, 408 residues long: Imidazolonepropionase (408 aa).

Residues H72 and H74 each coordinate Fe(3+). 2 residues coordinate Zn(2+): H72 and H74. Positions 81, 144, and 177 each coordinate 4-imidazolone-5-propanoate. Position 144 (Y144) interacts with N-formimidoyl-L-glutamate. H242 serves as a coordination point for Fe(3+). Position 242 (H242) interacts with Zn(2+). Residue Q245 participates in 4-imidazolone-5-propanoate binding. Residue D317 participates in Fe(3+) binding. D317 contributes to the Zn(2+) binding site. N-formimidoyl-L-glutamate contacts are provided by N319 and G321. A 4-imidazolone-5-propanoate-binding site is contributed by T322.

This sequence belongs to the metallo-dependent hydrolases superfamily. HutI family. It depends on Zn(2+) as a cofactor. Fe(3+) is required as a cofactor.

The protein localises to the cytoplasm. The catalysed reaction is 4-imidazolone-5-propanoate + H2O = N-formimidoyl-L-glutamate. It participates in amino-acid degradation; L-histidine degradation into L-glutamate; N-formimidoyl-L-glutamate from L-histidine: step 3/3. In terms of biological role, catalyzes the hydrolytic cleavage of the carbon-nitrogen bond in imidazolone-5-propanoate to yield N-formimidoyl-L-glutamate. It is the third step in the universal histidine degradation pathway. In Aliivibrio fischeri (strain MJ11) (Vibrio fischeri), this protein is Imidazolonepropionase.